The primary structure comprises 806 residues: Putative phage-related protein YobO (806 aa).

Residues 1 to 23 (MVHFKNCPDPSLNANSQSHPEFS) are disordered. Residues 12 to 21 (LNANSQSHPE) show a composition bias toward polar residues. PbH1 repeat units follow at residues 199–221 (VEYG…DITS), 237–259 (SRYI…TTHY), 260–292 (SEYI…EIDD), 294–315 (SRHV…EVKA), 419–441 (SQNI…DINL), and 448–470 (TDYI…SIGG).

The protein is Putative phage-related protein YobO (yobO) of Bacillus subtilis (strain 168).